Reading from the N-terminus, the 91-residue chain is Large ribosomal subunit protein bL28 (91 aa).

This sequence belongs to the bacterial ribosomal protein bL28 family.

This Protochlamydia amoebophila (strain UWE25) protein is Large ribosomal subunit protein bL28.